We begin with the raw amino-acid sequence, 518 residues long: Putative ribose/galactose/methyl galactoside import ATP-binding protein (518 aa).

Residues 1–22 (MSIAVLDRPMSRQDTPSASSVP) form a disordered region. Residues 12 to 22 (RQDTPSASSVP) show a composition bias toward polar residues. 2 consecutive ABC transporter domains span residues 29–265 (LEVR…VGRE) and 275–515 (VPIG…VMEL). 61–68 (GENGAGKS) contacts ATP.

It belongs to the ABC transporter superfamily. Carbohydrate importer 2 (CUT2) (TC 3.A.1.2) family.

It localises to the cell inner membrane. It catalyses the reaction D-ribose(out) + ATP + H2O = D-ribose(in) + ADP + phosphate + H(+). The catalysed reaction is D-galactose(out) + ATP + H2O = D-galactose(in) + ADP + phosphate + H(+). In terms of biological role, part of an ABC transporter complex involved in carbohydrate import. Could be involved in ribose, galactose and/or methyl galactoside import. Responsible for energy coupling to the transport system. In Ralstonia nicotianae (strain ATCC BAA-1114 / GMI1000) (Ralstonia solanacearum), this protein is Putative ribose/galactose/methyl galactoside import ATP-binding protein.